The following is a 500-amino-acid chain: Probable malate:quinone oxidoreductase (500 aa).

The protein belongs to the MQO family. The cofactor is FAD.

The enzyme catalyses (S)-malate + a quinone = a quinol + oxaloacetate. It functions in the pathway carbohydrate metabolism; tricarboxylic acid cycle; oxaloacetate from (S)-malate (quinone route): step 1/1. The protein is Probable malate:quinone oxidoreductase of Bacillus cereus (strain B4264).